A 41-amino-acid polypeptide reads, in one-letter code: Large ribosomal subunit protein bL36 (41 aa).

It belongs to the bacterial ribosomal protein bL36 family.

The chain is Large ribosomal subunit protein bL36 from Azorhizobium caulinodans (strain ATCC 43989 / DSM 5975 / JCM 20966 / LMG 6465 / NBRC 14845 / NCIMB 13405 / ORS 571).